Reading from the N-terminus, the 398-residue chain is Mitogen-activated protein kinase 1 (398 aa).

The interval 1 to 26 is disordered; sequence MDAGAQPPDTEMAEAGGGQQPPAAAA. One can recognise a Protein kinase domain in the interval 67–352; sequence KPPILPIGKG…VEGALAHPYL (286 aa). ATP contacts are provided by residues 73–81 and K96; that span reads IGKGAYGIV. The Proton acceptor role is filled by D193. The residue at position 225 (T225) is a Phosphothreonine. The TXY motif lies at 225-227; the sequence is TEY. Y227 carries the post-translational modification Phosphotyrosine.

The protein belongs to the protein kinase superfamily. CMGC Ser/Thr protein kinase family. MAP kinase subfamily. As to quaternary structure, may interact with RAC1. In terms of processing, dually phosphorylated on Thr-225 and Tyr-227, which activates the enzyme.

It catalyses the reaction L-seryl-[protein] + ATP = O-phospho-L-seryl-[protein] + ADP + H(+). It carries out the reaction L-threonyl-[protein] + ATP = O-phospho-L-threonyl-[protein] + ADP + H(+). With respect to regulation, activated by threonine and tyrosine phosphorylation. Activated in response to sphingolipid elicitor (SE). Its function is as follows. Involved in sphingolipid elicitor (SE)-dependent defense signaling pathway. Acts downstream of heterotrimeric G protein alpha subunit and small GTPase RAC1. May regulate the expression of various genes involved in biotic and abiotic stress response. Involved in an abscisic acid signaling pathway that regulates the activities of antioxidant enzymes and the production of hydrogen peroxide. Acts downstream of CCAMK. The sequence is that of Mitogen-activated protein kinase 1 (MPK1) from Oryza sativa subsp. japonica (Rice).